Consider the following 129-residue polypeptide: Small ribosomal subunit protein uS11 (129 aa).

Belongs to the universal ribosomal protein uS11 family. Part of the 30S ribosomal subunit. Interacts with proteins S7 and S18. Binds to IF-3.

Its function is as follows. Located on the platform of the 30S subunit, it bridges several disparate RNA helices of the 16S rRNA. Forms part of the Shine-Dalgarno cleft in the 70S ribosome. In Psychrobacter arcticus (strain DSM 17307 / VKM B-2377 / 273-4), this protein is Small ribosomal subunit protein uS11.